We begin with the raw amino-acid sequence, 149 residues long: Large ribosomal subunit protein uL13 (149 aa).

Belongs to the universal ribosomal protein uL13 family. As to quaternary structure, part of the 50S ribosomal subunit.

In terms of biological role, this protein is one of the early assembly proteins of the 50S ribosomal subunit, although it is not seen to bind rRNA by itself. It is important during the early stages of 50S assembly. This chain is Large ribosomal subunit protein uL13, found in Thermobifida fusca (strain YX).